The chain runs to 143 residues: Transcriptional regulator MraZ (143 aa).

SpoVT-AbrB domains follow at residues 5–47 (EYEH…PRSV) and 76–119 (AADM…APRR).

Belongs to the MraZ family. In terms of assembly, forms oligomers.

It localises to the cytoplasm. The protein localises to the nucleoid. The chain is Transcriptional regulator MraZ from Roseiflexus sp. (strain RS-1).